We begin with the raw amino-acid sequence, 556 residues long: Man(5)GlcNAc(2)-PP-dolichol translocation protein RFT1 (556 aa).

12 helical membrane passes run 10 to 30, 41 to 61, 91 to 111, 129 to 149, 156 to 176, 184 to 204, 353 to 373, 389 to 409, 440 to 460, 461 to 477, 489 to 509, and 517 to 537; these read LLGA…TFGI, EVLG…LFLS, LTVP…LNWL, VAFS…AQVF, ILLN…IVTG, AFAI…YGFF, SVLN…FTFG, FVAG…IYLL, VSFL…GFIF, ANCI…TYYI, LLGL…GIVC, and LATH…SWAL.

Belongs to the RFT1 family.

It is found in the endoplasmic reticulum membrane. It functions in the pathway protein modification; protein glycosylation. Functionally, intramembrane glycolipid transporter that operates in the biosynthetic pathway of dolichol-linked oligosaccharides, the glycan precursors employed in protein asparagine (N)-glycosylation. The sequential addition of sugars to dolichol pyrophosphate produces dolichol-linked oligosaccharides containing fourteen sugars, including two GlcNAcs, nine mannoses and three glucoses. Once assembled, the oligosaccharide is transferred from the lipid to nascent proteins by oligosaccharyltransferases. The assembly of dolichol-linked oligosaccharides begins on the cytosolic side of the endoplasmic reticulum membrane and finishes in its lumen. RFT1 could mediate the translocation of the cytosolically oriented intermediate DolPP-GlcNAc2Man5, produced by ALG11, into the ER lumen where dolichol-linked oligosaccharides assembly continues. However, the intramembrane lipid transporter activity could not be confirmed in vitro. In Drosophila melanogaster (Fruit fly), this protein is Man(5)GlcNAc(2)-PP-dolichol translocation protein RFT1.